We begin with the raw amino-acid sequence, 155 residues long: Small ribosomal subunit protein uS7 (155 aa).

Belongs to the universal ribosomal protein uS7 family. As to quaternary structure, part of the 30S ribosomal subunit. Contacts proteins S9 and S11.

One of the primary rRNA binding proteins, it binds directly to 16S rRNA where it nucleates assembly of the head domain of the 30S subunit. Is located at the subunit interface close to the decoding center, probably blocks exit of the E-site tRNA. In Xylella fastidiosa (strain M12), this protein is Small ribosomal subunit protein uS7.